A 1693-amino-acid polypeptide reads, in one-letter code: Latrophilin Cirl (1693 aa).

The Extracellular segment spans residues 1–774; that stretch reads MVLQGAKQRL…LFTMFDGNMR (774 aa). In terms of domain architecture, SUEL-type lectin spans 30 to 119; sequence ACEGKKLTIE…KYLEAHYQCV (90 aa). 4 N-linked (GlcNAc...) asparagine glycosylation sites follow: Asn147, Asn260, Asn306, and Asn345. The segment at 190-309 is disordered; sequence PPATHATPPG…GPSVSSNGSA (120 aa). Polar residues-rich tracts occupy residues 259-269 and 287-309; these read SNATAPSNTRI and KSSPNRTPGTAASGPSVSSNGSA. Residues 379–406 are disordered; it reads SFDEDDEEMAGTSTTTPMSTSGDCLHNS. Positions 390 to 399 are enriched in low complexity; sequence TSTTTPMSTS. Asn405, Asn662, Asn710, and Asn737 each carry an N-linked (GlcNAc...) asparagine glycan. The GAIN-B domain occupies 568 to 761; that stretch reads RSVVQKVKNI…AILMDVVDEH (194 aa). Disulfide bonds link Cys716–Cys743 and Cys731–Cys745. The interval 716-761 is GPS; that stretch reads CVFWNYIDHAWSANGCSLESTNRTHSVCSCNHLTNFAILMDVVDEH. A helical membrane pass occupies residues 775-795; it reads IFIYISIAICVVFIVIALLTL. The Cytoplasmic portion of the chain corresponds to 796-808; the sequence is KLFNGVFVKSART. Residues 809-829 form a helical membrane-spanning segment; that stretch reads SIYINIYICLLAIELLFLLGI. At 830–835 the chain is on the extracellular side; sequence EQTETS. The chain crosses the membrane as a helical span at residues 836–856; that stretch reads IFCGFITVFLHCAILSGTSWF. The Cytoplasmic segment spans residues 857 to 882; it reads CYEAFHSYSTLTSDELLLEVDQTPKV. The chain crosses the membrane as a helical span at residues 883 to 903; that stretch reads NCYYLLSYGLSLSVVAISLVI. Topologically, residues 904–927 are extracellular; it reads NPSTYTQNDYCVLMEANAVFYATF. A helical transmembrane segment spans residues 928 to 948; sequence VAPVLIFFMAAIGYTFLSWII. The Cytoplasmic portion of the chain corresponds to 949–975; it reads MCRKSRTGLKTKEHTRLATVRFDIRCS. The chain crosses the membrane as a helical span at residues 976 to 996; that stretch reads FVFFLLLSAVWCSAYFYLRGA. The Extracellular portion of the chain corresponds to 997–1003; it reads KMDEDVT. The helical transmembrane segment at 1004 to 1024 threads the bilayer; it reads GIYGYNFICFNTLLGLYIFVF. At 1025-1693 the chain is on the cytoplasmic side; sequence HCIQNEKIRR…VRCYLEPLAK (669 aa). The disordered stretch occupies residues 1089–1109; the sequence is PLGTNDDAHDEQQQQQHMSAT. Phosphoserine occurs at positions 1165, 1256, and 1263. Disordered regions lie at residues 1237-1264, 1279-1362, 1450-1529, and 1596-1678; these read KPNSQHGKKKRGGVGAIPASPSGSLHSR, KTKP…APPP, SRYG…LPPQ, and SMRG…SAML. Residues 1307–1323 show a composition bias toward low complexity; it reads QQQQQLRQQRQQQQQQL. Phosphoserine is present on residues Ser1324 and Ser1325. Positions 1337-1357 are enriched in low complexity; it reads LHLQHQQQQQQQRRAGGQQQL. Polar residues predominate over residues 1464–1475; sequence RNQQQQQHSLAQ. Acidic residues-rich tracts occupy residues 1485–1498 and 1508–1521; these read DEDDDEDEDDEETT and CDEEEEDEESDMED. Over residues 1640-1663 the composition is skewed to low complexity; it reads QQLQKLSPQSTTSSSSHTSHSNPH.

It belongs to the G-protein coupled receptor 2 family. LN-TM7 subfamily. Forms a heterodimer, consisting of a large extracellular region non-covalently linked to a seven-transmembrane moiety. In terms of processing, proteolytically cleaved into 2 subunits, an extracellular subunit and a seven-transmembrane subunit.

It localises to the cell membrane. The sequence is that of Latrophilin Cirl from Drosophila pseudoobscura pseudoobscura (Fruit fly).